A 583-amino-acid polypeptide reads, in one-letter code: Complement factor I (583 aa).

The first 18 residues, methionine 1 to cysteine 18, serve as a signal peptide directing secretion. Intrachain disulfides connect cysteine 33–cysteine 255, cysteine 43–cysteine 54, cysteine 48–cysteine 59, cysteine 61–cysteine 93, cysteine 67–cysteine 86, cysteine 75–cysteine 106, cysteine 141–cysteine 181, cysteine 154–cysteine 214, cysteine 186–cysteine 196, cysteine 229–cysteine 247, cysteine 259–cysteine 271, cysteine 266–cysteine 284, cysteine 278–cysteine 293, cysteine 327–cysteine 453, cysteine 365–cysteine 381, and cysteine 373–cysteine 444. Positions isoleucine 55 to alanine 108 constitute a Kazal-like domain. Asparagine 70, asparagine 103, asparagine 173, and asparagine 177 each carry an N-linked (GlcNAc...) asparagine glycan. Residues valine 114–valine 212 form the SRCR domain. LDL-receptor class A domains lie at valine 213–lysine 257 and alanine 258–glutamate 294. Residues lysine 239, aspartate 242, isoleucine 244, aspartate 246, aspartate 252, and glutamate 253 each coordinate Ca(2+). Residues tyrosine 276, asparagine 279, glutamate 281, aspartate 283, aspartate 289, and glutamate 290 each coordinate Ca(2+). Residues isoleucine 340–glycine 574 form the Peptidase S1 domain. Residues histidine 380 and aspartate 429 each act as charge relay system in the active site. 2 N-linked (GlcNAc...) asparagine glycosylation sites follow: asparagine 464 and asparagine 494. 3 disulfide bridges follow: cysteine 467/cysteine 531, cysteine 495/cysteine 510, and cysteine 521/cysteine 550. Serine 525 acts as the Charge relay system in catalysis. N-linked (GlcNAc...) asparagine glycosylation occurs at asparagine 536.

Belongs to the peptidase S1 family. Heterodimer of a light and heavy chains; disulfide-linked. The fully processed and mature protein circulates as a zymogen, and is allosterically activated by substrate-induced remodeling of the active site. As to expression, plasma.

It localises to the secreted. It is found in the extracellular space. It catalyses the reaction Inactivates complement subcomponents C3b, iC3b and C4b by proteolytic cleavage.. Functionally, responsible for cleaving the alpha-chains of C4b and C3b in the presence of the cofactors C4-binding protein and factor H respectively. This is Complement factor I (CFI) from Pongo abelii (Sumatran orangutan).